The primary structure comprises 591 residues: Max-binding protein MNT (591 aa).

S2 is subject to N-acetylserine. Disordered stretches follow at residues 17 to 122 (AQQQ…APRQ) and 182 to 223 (PGVQ…GIGT). Residues 22 to 44 (RAREEQERLRLEREREREQEQKR) show a composition bias toward basic and acidic residues. 2 stretches are compositionally biased toward pro residues: residues 63–84 (EAPP…PLAT) and 102–120 (SLPP…PLAP). Basic and acidic residues predominate over residues 205-216 (PAEEAKSSEQKK). Residues 222–273 (GTREVHNKLEKNRRAHLKECFETLKRNIPNVDDKKTSNLSVLRTALRYIQSL) form the bHLH domain. Residues 273–301 (LKRKEKEYEHEMERLAREKIATQQRLAEL) are leucine-zipper. Residues 321 to 426 (TGQPEDDQAS…PPPATPTQTL (106 aa)) are disordered. Residues 336–346 (EGEDNVDEEME) are compositionally biased toward acidic residues. Over residues 374-383 (STAPAPLPTH) the composition is skewed to pro residues. A compositionally biased stretch (low complexity) spans 390–411 (PVALSPAHLPVQQQQPPQQKTP). Over residues 412 to 421 (LPAPPPPPAT) the composition is skewed to pro residues.

As to quaternary structure, efficient DNA binding requires dimerization with another bHLH protein. Binds DNA as a homodimer or a heterodimer with MAX.

The protein localises to the nucleus. In terms of biological role, binds DNA as a heterodimer with MAX and represses transcription. Binds to the canonical E box sequence 5'-CACGTG-3' and, with higher affinity, to 5'-CACGCG-3'. The sequence is that of Max-binding protein MNT (Mnt) from Mus musculus (Mouse).